Reading from the N-terminus, the 210-residue chain is uncharacterized protein (210 aa).

A Fe2OG dioxygenase domain is found at 90–193 (KPDQIIVNEY…RISITFRNVI (104 aa)).

This is an uncharacterized protein from Acanthamoeba polyphaga (Amoeba).